A 505-amino-acid chain; its full sequence is Outer capsid protein VP5 (505 aa).

An involved in membrane permeabilization region spans residues 1 to 42 (MGKFTSFLKRAGNATKRALTSDSAKKMYKLAGKTLQRVVESE).

It belongs to the orbivirus VP5 family.

The protein localises to the virion. In terms of biological role, VP5 protein is one of the two proteins (with VP2) which constitute the virus particle outer capsid. Acts as a membrane permeabilization protein that mediates release of viral particles from endosomal compartments into the cytoplasm. Permeabilization activity is probably negatively regulated by VP2 and is triggered by endosomal degradation of VP2 and exposure to low pH. The chain is Outer capsid protein VP5 (Segment-6) from African horse sickness virus (AHSV).